Reading from the N-terminus, the 92-residue chain is uncharacterized protein (92 aa).

This is an uncharacterized protein from Treponema pallidum (strain Nichols).